A 348-amino-acid chain; its full sequence is Phosphoribosylformylglycinamidine cyclo-ligase (348 aa).

The protein belongs to the AIR synthase family.

The protein localises to the cytoplasm. It carries out the reaction 2-formamido-N(1)-(5-O-phospho-beta-D-ribosyl)acetamidine + ATP = 5-amino-1-(5-phospho-beta-D-ribosyl)imidazole + ADP + phosphate + H(+). The protein operates within purine metabolism; IMP biosynthesis via de novo pathway; 5-amino-1-(5-phospho-D-ribosyl)imidazole from N(2)-formyl-N(1)-(5-phospho-D-ribosyl)glycinamide: step 2/2. The protein is Phosphoribosylformylglycinamidine cyclo-ligase of Geotalea uraniireducens (strain Rf4) (Geobacter uraniireducens).